The following is a 123-amino-acid chain: ATP synthase epsilon chain (123 aa).

It belongs to the ATPase epsilon chain family. F-type ATPases have 2 components, CF(1) - the catalytic core - and CF(0) - the membrane proton channel. CF(1) has five subunits: alpha(3), beta(3), gamma(1), delta(1), epsilon(1). CF(0) has three main subunits: a, b and c.

The protein localises to the cell membrane. Its function is as follows. Produces ATP from ADP in the presence of a proton gradient across the membrane. The protein is ATP synthase epsilon chain of Corynebacterium diphtheriae (strain ATCC 700971 / NCTC 13129 / Biotype gravis).